The primary structure comprises 280 residues: uncharacterized protein (280 aa).

The 113-residue stretch at 96–208 (DKSIGIFQRF…GYLSTPPPVK (113 aa)) folds into the DUF1279 domain. The helical transmembrane segment at 115–135 (VMVPVHIVTSTVWFGSFYYAA) threads the bilayer. Positions 207–274 (VKEFLQDKME…KLQETKDKMS (68 aa)) form a coiled coil. The tract at residues 245–280 (SERMEETKERFSETKDKFSEKLQETKDKMSFRKKAD) is disordered.

The protein resides in the membrane. This is an uncharacterized protein from Danio rerio (Zebrafish).